A 314-amino-acid chain; its full sequence is Ribosomal RNA small subunit methyltransferase H (314 aa).

S-adenosyl-L-methionine is bound by residues 31 to 33 (GGY), aspartate 49, phenylalanine 76, aspartate 118, and glutamine 125.

This sequence belongs to the methyltransferase superfamily. RsmH family.

The protein localises to the cytoplasm. The enzyme catalyses cytidine(1402) in 16S rRNA + S-adenosyl-L-methionine = N(4)-methylcytidine(1402) in 16S rRNA + S-adenosyl-L-homocysteine + H(+). Functionally, specifically methylates the N4 position of cytidine in position 1402 (C1402) of 16S rRNA. This chain is Ribosomal RNA small subunit methyltransferase H, found in Wolbachia pipientis wMel.